The primary structure comprises 477 residues: Glycogen synthase (477 aa).

Lys15 contacts ADP-alpha-D-glucose.

The protein belongs to the glycosyltransferase 1 family. Bacterial/plant glycogen synthase subfamily.

The enzyme catalyses [(1-&gt;4)-alpha-D-glucosyl](n) + ADP-alpha-D-glucose = [(1-&gt;4)-alpha-D-glucosyl](n+1) + ADP + H(+). It functions in the pathway glycan biosynthesis; glycogen biosynthesis. Functionally, synthesizes alpha-1,4-glucan chains using ADP-glucose. This chain is Glycogen synthase, found in Edwardsiella ictaluri (strain 93-146).